Consider the following 260-residue polypeptide: Dynein regulatory complex subunit 6 (260 aa).

Basic residues predominate over residues Met-1–Lys-13. The interval Met-1 to Pro-43 is disordered. Residues Lys-14 to Val-30 show a composition bias toward basic and acidic residues.

It belongs to the DRC6 family. In terms of assembly, component of the nexin-dynein regulatory complex (N-DRC).

It localises to the cytoplasm. The protein resides in the cytoskeleton. It is found in the flagellum axoneme. In terms of biological role, component of the nexin-dynein regulatory complex (N-DRC), a key regulator of ciliary/flagellar motility which maintains the alignment and integrity of the distal axoneme and regulates microtubule sliding in motile axonemes. The chain is Dynein regulatory complex subunit 6 from Chlamydomonas reinhardtii (Chlamydomonas smithii).